Consider the following 564-residue polypeptide: Arrestin domain-containing protein E (564 aa).

Residues 74 to 146 (SQQPQSSQPS…NTSNGFSPPN (73 aa)) show a composition bias toward low complexity. 2 disordered regions span residues 74–150 (SQQP…LNKN) and 245–286 (ASQP…SFPS). The segment covering 250 to 259 (PQQPQQPQPQ) has biased composition (pro residues). Positions 260–269 (QPQQQQFQQQ) are enriched in low complexity. Polar residues predominate over residues 270–285 (SYNNNNSTQSMLSSFP). The LIM zinc-binding domain maps to 348–413 (DKCAACDALL…PMCFESTTGL (66 aa)).

This Dictyostelium discoideum (Social amoeba) protein is Arrestin domain-containing protein E (adcE).